We begin with the raw amino-acid sequence, 237 residues long: 7-carboxy-7-deazaguanine synthase (237 aa).

Residues 15–17 (LSG) and Arg30 contribute to the substrate site. The 213-residue stretch at 21–233 (STGIPTIFVR…IQTHKYIWGD (213 aa)) folds into the Radical SAM core domain. [4Fe-4S] cluster is bound by residues Cys34, Cys38, and Cys48. Thr50 is a binding site for Mg(2+). Thr84 is a substrate binding site. An S-adenosyl-L-methionine-binding site is contributed by Gly86.

Belongs to the radical SAM superfamily. 7-carboxy-7-deazaguanine synthase family. As to quaternary structure, homodimer. [4Fe-4S] cluster serves as cofactor. S-adenosyl-L-methionine is required as a cofactor. It depends on Mg(2+) as a cofactor.

It catalyses the reaction 6-carboxy-5,6,7,8-tetrahydropterin + H(+) = 7-carboxy-7-deazaguanine + NH4(+). It participates in purine metabolism; 7-cyano-7-deazaguanine biosynthesis. Catalyzes the complex heterocyclic radical-mediated conversion of 6-carboxy-5,6,7,8-tetrahydropterin (CPH4) to 7-carboxy-7-deazaguanine (CDG), a step common to the biosynthetic pathways of all 7-deazapurine-containing compounds. This chain is 7-carboxy-7-deazaguanine synthase, found in Leptospira interrogans serogroup Icterohaemorrhagiae serovar Lai (strain 56601).